We begin with the raw amino-acid sequence, 634 residues long: MVRLVLPNPGLDARIPSLAELETIEQEEASSRPKWDNKAQYMLTCLGFCVGLGNVWRFPYLCQSHGGGAFMIPFLILLVLEGIPLLYLEFAIGQRLRRGSLGVWSSIHPALKGLGLASMLTSFMVGLYYNTIISWIMWYLFNSFQEPLPWSDCPLNENQTGYVDECARSSPVDYFWYRETLNISTSISDSGSIQWWMLLCLACAWSVLYMCTIRGIETTGKAVYITSTLPYVVLTIFLIRGLTLKGATNGIVFLFTPNVTELAQPDTWLDAGAQVFFSFSLAFGGLISFSSYNSVHNNCEKDSVIVSIINGFTSVYVAIVVYSVIGFRATQRYDDCFSTNILTLINGFDLPEGNVTQENFVDMQQRCNASDPAAYAQLVFQTCDINAFLSEAVEGTGLAFIVFTEAITKMPLSPLWSVLFFIMLFCLGLSSMFGNMEGVVVPLQDLRVIPPKWPKEVLTGLICLGTFLIGFIFTLNSGQYWLSLLDSYAGSIPLLIIAFCEMFSVVYVYGVDRFNKDIEFMIGHKPNIFWQVTWRVVSPLLMLIIFLFFFVVEVSQELTYSIWDPGYEEFPKSQKISYPNWVYVVVVIVAGVPSLTIPGYAIYKLIRNHCQKPGDHQGLVSTLSTASMNGDLKY.

Residues 1-41 lie on the Cytoplasmic side of the membrane; that stretch reads MVRLVLPNPGLDARIPSLAELETIEQEEASSRPKWDNKAQY. A Phosphoserine modification is found at serine 17. Residues 42 to 62 traverse the membrane as a helical segment; it reads MLTCLGFCVGLGNVWRFPYLC. Over 63–67 the chain is Extracellular; sequence QSHGG. The helical transmembrane segment at 68 to 88 threads the bilayer; sequence GAFMIPFLILLVLEGIPLLYL. The Cytoplasmic portion of the chain corresponds to 89–120; the sequence is EFAIGQRLRRGSLGVWSSIHPALKGLGLASML. A helical transmembrane segment spans residues 121–141; the sequence is TSFMVGLYYNTIISWIMWYLF. Residues 142 to 192 lie on the Extracellular side of the membrane; sequence NSFQEPLPWSDCPLNENQTGYVDECARSSPVDYFWYRETLNISTSISDSGS. Asparagine 158 and asparagine 182 each carry an N-linked (GlcNAc...) asparagine glycan. The helical transmembrane segment at 193–213 threads the bilayer; it reads IQWWMLLCLACAWSVLYMCTI. The Cytoplasmic segment spans residues 214 to 221; that stretch reads RGIETTGK. A helical membrane pass occupies residues 222 to 242; the sequence is AVYITSTLPYVVLTIFLIRGL. The Extracellular portion of the chain corresponds to 243–268; sequence TLKGATNGIVFLFTPNVTELAQPDTW. Asparagine 258 carries an N-linked (GlcNAc...) asparagine glycan. A helical transmembrane segment spans residues 269–289; that stretch reads LDAGAQVFFSFSLAFGGLISF. Residues 290–304 are Cytoplasmic-facing; the sequence is SSYNSVHNNCEKDSV. Residues 305–325 traverse the membrane as a helical segment; that stretch reads IVSIINGFTSVYVAIVVYSVI. The Extracellular segment spans residues 326–413; sequence GFRATQRYDD…TEAITKMPLS (88 aa). Asparagine 354 and asparagine 368 each carry an N-linked (GlcNAc...) asparagine glycan. The chain crosses the membrane as a helical span at residues 414–434; that stretch reads PLWSVLFFIMLFCLGLSSMFG. Over 435–456 the chain is Cytoplasmic; sequence NMEGVVVPLQDLRVIPPKWPKE. A helical transmembrane segment spans residues 457–477; it reads VLTGLICLGTFLIGFIFTLNS. The Extracellular segment spans residues 478–490; that stretch reads GQYWLSLLDSYAG. Residues 491–511 form a helical membrane-spanning segment; that stretch reads SIPLLIIAFCEMFSVVYVYGV. Residues 512-531 lie on the Cytoplasmic side of the membrane; that stretch reads DRFNKDIEFMIGHKPNIFWQ. A helical transmembrane segment spans residues 532 to 552; sequence VTWRVVSPLLMLIIFLFFFVV. Over 553–581 the chain is Extracellular; it reads EVSQELTYSIWDPGYEEFPKSQKISYPNW. The helical transmembrane segment at 582–602 threads the bilayer; sequence VYVVVVIVAGVPSLTIPGYAI. Topologically, residues 603–634 are cytoplasmic; it reads YKLIRNHCQKPGDHQGLVSTLSTASMNGDLKY. The residue at position 627 (serine 627) is a Phosphoserine.

The protein belongs to the sodium:neurotransmitter symporter (SNF) (TC 2.A.22) family. SLC6A19 subfamily. As to quaternary structure, interacts in a tissue-specific manner with ACE2 in small intestine and with CLTRN in the kidney. Interacts with CLTRN; this interaction is required for trafficking of SLC6A19 to the plasma membrane and for its catalytic activation in kidneys. Interacts with ACE2; this interaction is required for trafficking of SLC6A19 to the plasma membrane and for its catalytic activation in intestine. Interacts with ANPEP; the interaction positively regulates its amino acid transporter activity. Robust expression in kidney and small intestine, with minimal expression in pancreas. Also expressed in stomach, liver, duodenum, ileocecum, colon and prostate. Not detected in testis, whole brain, cerebellum, fetal liver, spleen, skeletal muscle, uterus, heart or lung.

It localises to the cell membrane. The protein resides in the apical cell membrane. The enzyme catalyses L-alanine(in) + Na(+)(in) = L-alanine(out) + Na(+)(out). It carries out the reaction L-cysteine(in) + Na(+)(in) = L-cysteine(out) + Na(+)(out). The catalysed reaction is L-glutamine(in) + Na(+)(in) = L-glutamine(out) + Na(+)(out). It catalyses the reaction glycine(in) + Na(+)(in) = glycine(out) + Na(+)(out). The enzyme catalyses L-isoleucine(in) + Na(+)(in) = L-isoleucine(out) + Na(+)(out). It carries out the reaction L-leucine(in) + Na(+)(in) = L-leucine(out) + Na(+)(out). The catalysed reaction is L-methionine(in) + Na(+)(in) = L-methionine(out) + Na(+)(out). It catalyses the reaction L-phenylalanine(in) + Na(+)(in) = L-phenylalanine(out) + Na(+)(out). The enzyme catalyses L-serine(in) + Na(+)(in) = L-serine(out) + Na(+)(out). It carries out the reaction L-tryptophan(in) + Na(+)(in) = L-tryptophan(out) + Na(+)(out). The catalysed reaction is L-tyrosine(in) + Na(+)(in) = L-tyrosine(out) + Na(+)(out). It catalyses the reaction L-valine(in) + Na(+)(in) = L-valine(out) + Na(+)(out). Functionally, transporter that mediates resorption of neutral amino acids across the apical membrane of renal and intestinal epithelial cells. This uptake is sodium-dependent and chloride-independent. Requires CLTRN in kidney or ACE2 in intestine for cell surface expression and amino acid transporter activity. This chain is Sodium-dependent neutral amino acid transporter B(0)AT1 (SLC6A19), found in Homo sapiens (Human).